The primary structure comprises 143 residues: Transcriptional regulator MraZ (143 aa).

SpoVT-AbrB domains are found at residues Thr5–Glu47 and Ala76–Ala119.

The protein belongs to the MraZ family. Forms oligomers.

The protein resides in the cytoplasm. It is found in the nucleoid. This chain is Transcriptional regulator MraZ, found in Corynebacterium urealyticum (strain ATCC 43042 / DSM 7109).